The primary structure comprises 397 residues: Nicotinate phosphoribosyltransferase (397 aa).

At His-221 the chain carries Phosphohistidine; by autocatalysis.

It belongs to the NAPRTase family. Transiently phosphorylated on a His residue during the reaction cycle. Phosphorylation strongly increases the affinity for substrates and increases the rate of nicotinate D-ribonucleotide production. Dephosphorylation regenerates the low-affinity form of the enzyme, leading to product release.

It carries out the reaction nicotinate + 5-phospho-alpha-D-ribose 1-diphosphate + ATP + H2O = nicotinate beta-D-ribonucleotide + ADP + phosphate + diphosphate. It functions in the pathway cofactor biosynthesis; NAD(+) biosynthesis; nicotinate D-ribonucleotide from nicotinate: step 1/1. In terms of biological role, catalyzes the synthesis of beta-nicotinate D-ribonucleotide from nicotinate and 5-phospho-D-ribose 1-phosphate at the expense of ATP. The protein is Nicotinate phosphoribosyltransferase of Herminiimonas arsenicoxydans.